Reading from the N-terminus, the 355-residue chain is Ubiquinone biosynthesis protein COQ4 homolog, mitochondrial (355 aa).

Zn(2+) contacts are provided by His134, Asp135, His138, and Glu150.

The protein belongs to the COQ4 family. As to quaternary structure, component of a multi-subunit COQ enzyme complex. The cofactor is Zn(2+).

The protein resides in the mitochondrion inner membrane. The catalysed reaction is a 4-hydroxy-3-methoxy-5-(all-trans-polyprenyl)benzoate + H(+) = a 2-methoxy-6-(all-trans-polyprenyl)phenol + CO2. It participates in cofactor biosynthesis; ubiquinone biosynthesis. In terms of biological role, lyase that catalyzes the C1-decarboxylation of 4-hydroxy-3-methoxy-5-(all-trans-polyprenyl)benzoic acid into 2-methoxy-6-(all-trans-polyprenyl)phenol during ubiquinone biosynthesis. The sequence is that of Ubiquinone biosynthesis protein COQ4 homolog, mitochondrial from Plasmodium vivax (strain Salvador I).